Reading from the N-terminus, the 214-residue chain is Probable nicotinate-nucleotide adenylyltransferase (214 aa).

This sequence belongs to the NadD family.

The catalysed reaction is nicotinate beta-D-ribonucleotide + ATP + H(+) = deamido-NAD(+) + diphosphate. Its pathway is cofactor biosynthesis; NAD(+) biosynthesis; deamido-NAD(+) from nicotinate D-ribonucleotide: step 1/1. In terms of biological role, catalyzes the reversible adenylation of nicotinate mononucleotide (NaMN) to nicotinic acid adenine dinucleotide (NaAD). This is Probable nicotinate-nucleotide adenylyltransferase from Psychromonas ingrahamii (strain DSM 17664 / CCUG 51855 / 37).